The chain runs to 148 residues: Lipoprotein MlpH (148 aa).

The first 17 residues, 1–17 (MKIINILFCLFLLMLNG), serve as a signal peptide directing secretion. Residue Cys18 is the site of N-palmitoyl cysteine attachment. Cys18 carries S-diacylglycerol cysteine lipidation. The interval 26-61 (LKNNAQQTKSRRKRDLTQKEVTQEKPKSKEELLREK) is disordered. Over residues 40-61 (DLTQKEVTQEKPKSKEELLREK) the composition is skewed to basic and acidic residues.

It belongs to the Multicopy lipoprotein (Mlp) family.

It localises to the cell outer membrane. Its function is as follows. An outer membrane protein that may participate in pathogenesis. Some human Lyme disease patients have antibodies against this protein. The Mlp proteins probably undergo intragenic recombination, generating new alleles. In Borreliella burgdorferi (strain ATCC 35210 / DSM 4680 / CIP 102532 / B31) (Borrelia burgdorferi), this protein is Lipoprotein MlpH.